The sequence spans 87 residues: U-actitoxin-Avd3o (87 aa).

A signal peptide spans 1–16 (MVYLLCFFLVADVSYG). One can recognise a BPTI/Kunitz inhibitor domain in the interval 21 to 71 (CLLPKVVGFCRARFPRYYYNSSSRRCEKFNYGGCGGNANNFSSYYECHIKC). Cystine bridges form between cysteine 21–cysteine 71, cysteine 30–cysteine 54, and cysteine 46–cysteine 67.

This sequence belongs to the venom Kunitz-type family. Sea anemone type 2 potassium channel toxin subfamily.

It is found in the secreted. The protein resides in the nematocyst. Functionally, serine protease inhibitor that inhibits both tissue and plasma kallikreins. Has hemolytic activity. Inhibits voltage-gated potassium channels (Kv). This is U-actitoxin-Avd3o from Anemonia viridis (Snakelocks anemone).